The primary structure comprises 229 residues: ATP synthase subunit a 1 (229 aa).

6 consecutive transmembrane segments (helical) span residues 25–45, 86–106, 111–131, 142–162, 181–201, and 202–222; these read ADAVAYTWLIMLLLLLFSFLA, VATVGLFVLVSNLIGLIPGFF, NINTTAACAIVVFIATHVVGI, FCGPILWLAPVMFFIEVIGHL, LVLIIFFGLAPFLVPLPMMLM, and GVLVSFIQAFVFMLLTMIYIQ.

This sequence belongs to the ATPase A chain family. F-type ATPases have 2 components, CF(1) - the catalytic core - and CF(0) - the membrane proton channel. CF(1) has five subunits: alpha(3), beta(3), gamma(1), delta(1), epsilon(1). CF(0) has three main subunits: a(1), b(2) and c(9-12). The alpha and beta chains form an alternating ring which encloses part of the gamma chain. CF(1) is attached to CF(0) by a central stalk formed by the gamma and epsilon chains, while a peripheral stalk is formed by the delta and b chains.

The protein resides in the cell inner membrane. Functionally, key component of the proton channel; it plays a direct role in the translocation of protons across the membrane. The sequence is that of ATP synthase subunit a 1 from Pelobacter propionicus (strain DSM 2379 / NBRC 103807 / OttBd1).